The sequence spans 577 residues: Arginine--tRNA ligase (577 aa).

Positions 122–132 (PNVAKEMHVGH) match the 'HIGH' region motif.

Belongs to the class-I aminoacyl-tRNA synthetase family. As to quaternary structure, monomer.

Its subcellular location is the cytoplasm. It carries out the reaction tRNA(Arg) + L-arginine + ATP = L-arginyl-tRNA(Arg) + AMP + diphosphate. This is Arginine--tRNA ligase from Escherichia coli O8 (strain IAI1).